Consider the following 335-residue polypeptide: Biotin synthase (335 aa).

A Radical SAM core domain is found at 50–279 (ADIQRAALLS…KARVRLSAGR (230 aa)). [4Fe-4S] cluster-binding residues include cysteine 65, cysteine 69, and cysteine 72. [2Fe-2S] cluster is bound by residues cysteine 110, cysteine 142, cysteine 202, and arginine 274.

The protein belongs to the radical SAM superfamily. Biotin synthase family. Homodimer. [4Fe-4S] cluster serves as cofactor. It depends on [2Fe-2S] cluster as a cofactor.

It catalyses the reaction (4R,5S)-dethiobiotin + (sulfur carrier)-SH + 2 reduced [2Fe-2S]-[ferredoxin] + 2 S-adenosyl-L-methionine = (sulfur carrier)-H + biotin + 2 5'-deoxyadenosine + 2 L-methionine + 2 oxidized [2Fe-2S]-[ferredoxin]. Its pathway is cofactor biosynthesis; biotin biosynthesis; biotin from 7,8-diaminononanoate: step 2/2. Functionally, catalyzes the conversion of dethiobiotin (DTB) to biotin by the insertion of a sulfur atom into dethiobiotin via a radical-based mechanism. This Methylorubrum extorquens (strain CM4 / NCIMB 13688) (Methylobacterium extorquens) protein is Biotin synthase.